A 325-amino-acid polypeptide reads, in one-letter code: Heat-inducible transcription repressor HrcA (325 aa).

Belongs to the HrcA family.

Its function is as follows. Negative regulator of class I heat shock genes (grpE-dnaK-dnaJ and groELS operons). Prevents heat-shock induction of these operons. The protein is Heat-inducible transcription repressor HrcA of Staphylococcus epidermidis (strain ATCC 35984 / DSM 28319 / BCRC 17069 / CCUG 31568 / BM 3577 / RP62A).